Reading from the N-terminus, the 323-residue chain is Glucokinase (323 aa).

8–13 contacts ATP; it reads GDVGGT.

The protein belongs to the bacterial glucokinase family.

The protein resides in the cytoplasm. The catalysed reaction is D-glucose + ATP = D-glucose 6-phosphate + ADP + H(+). This Yersinia enterocolitica serotype O:8 / biotype 1B (strain NCTC 13174 / 8081) protein is Glucokinase.